Consider the following 581-residue polypeptide: MEPHGETDLVSFAFSSPTPFDPTRPIYLDAQNPSRAFNARQFRLLVRSLIAGLRALGLKPGHCVLVQLENTVIHSALFFAIVGAGGVYMGCDVGSPAHELTHLLRLAEPQLVITAPGALSTLEVCSTQGESFSGQVLLVDELSIDNIVQFAHRAAAAGAEAQTEGLVDQTAGPCIRLESLLQHGESDWLRFEDREQSKRTPAAMFLTSGTSGLPKAAISTHHTIISHHLSVHYRVPYPVVRLMALPMYHSFGDFWTNIFPIRYGEPLYVLPRFDISTFLDAVRQHHISETYMVPAMVQILSQSSLPVAESLASLRYVGISGAPIDGFSIQRFQRLLSPDAVAGNLWGMTEVGVVFQNRYRVPLQFGSVGTLLHGYELRFVDPATGEDVAGTPDSPGELYVRGPGLLLGYKWRTDDKDEQGWFRTGDMVYARDGNYYIIGRTKDLIKVRGQVPDSLNSWTSHSTNRLCDSRYSVAPAEIEGILLKDPGVKDAAVIGVMLPDGSSEVPRAYVVRAGISPESTADQLTDLVQTQLASYKALDGGVVFVDEIPRTGIGKPHRARLSQLDREREKLASILGVSVPA.

204-215 (MFLTSGTSGLPK) is a binding site for AMP. The tract at residues 477–555 (EIEGILLKDP…DEIPRTGIGK (79 aa)) is AMP-binding.

Belongs to the ATP-dependent AMP-binding enzyme family.

The catalysed reaction is nicotinate + ATP + CoA = nicotinyl-CoA + AMP + diphosphate. It functions in the pathway secondary metabolite biosynthesis; terpenoid biosynthesis. In terms of biological role, nicotinic acid-CoA ligase; part of the gene cluster that mediates the biosynthesis of pyripyropene A, a specific human acyl-coenzyme A:cholesterol acyltransferase 2 inhibitor. The first step of the pathway is the synthesis of nicotinyl-CoA from nicotinic acid by the nicotinic acid-CoA ligase pyr1. Nicotinyl-CoA is then a substrate of polyketide synthase pyr2 to produce 4-hydroxy-6-(3-pyridinyl)-2H-pyran-2-one (HPPO) which is further prenylated by the polyprenyl transferase pyr6 to yield farnesyl-HPPO. The next steps consist of an epoxidation of farnesyl-HPPO to epoxyfarnesyl-HPPO by FAD-dependent monooxygenase pyr5 and a cyclization of the terpenoid portion by the terpene cyclase pyr4 to yield deacetyl-pyripyropene E. The 2 cytochrome P450 monooxygenases pyr3 and pyr9, and the 2 acetyltransferases pyr7 and pyr8 are involved in the conversion of deacetyl-pyripyropene E into pyripyropene A through several cycles of oxidation and acetylation steps. Pyr7 acetylates deacetyl-pyripyropene E to pyripyropene E which is oxidized to 11-deacetyl-pyripyropene O by pyr3, which is in turn acetylated into pyripyropene O by pyr8. Pyripyropene O is then oxidized to deacetyl-pyripyropene A by pyr9. Deacetyl-pyripyropene A is finally acetylated to pyripyropene A by pyr8. In Aspergillus fumigatus (strain ATCC MYA-4609 / CBS 101355 / FGSC A1100 / Af293) (Neosartorya fumigata), this protein is Nicotinic acid-CoA ligase pyr1.